We begin with the raw amino-acid sequence, 207 residues long: Small ribosomal subunit protein uS3 (207 aa).

In terms of domain architecture, KH type-2 spans 17–86 (IDEYLEKELR…NPQIEVEEIK (70 aa)).

Belongs to the universal ribosomal protein uS3 family. As to quaternary structure, part of the 30S ribosomal subunit.

Binds the lower part of the 30S subunit head. The sequence is that of Small ribosomal subunit protein uS3 from Thermococcus sibiricus (strain DSM 12597 / MM 739).